Here is a 91-residue protein sequence, read N- to C-terminus: UPF0250 protein PP_4802 (91 aa).

This sequence belongs to the UPF0250 family.

This chain is UPF0250 protein PP_4802, found in Pseudomonas putida (strain ATCC 47054 / DSM 6125 / CFBP 8728 / NCIMB 11950 / KT2440).